A 312-amino-acid chain; its full sequence is Short chain dehydrogenase pgmD (312 aa).

The NADP(+) site is built by Val46, Ile47, Lys171, Tyr207, Lys211, and Thr242. Catalysis depends on Tyr207, which acts as the Proton donor. Residue Lys211 is the Lowers pKa of active site Tyr of the active site.

The protein belongs to the short-chain dehydrogenases/reductases (SDR) family.

It functions in the pathway pigment biosynthesis. The protein operates within secondary metabolite biosynthesis. Short chain dehydrogenase; part of the gene cluster that mediates the biosynthesis of pleosporalin A, ascomycone A, as well as a third cryptic naphthoquinone derived pigment, all responsible for the coloration of conidia. Essential for the production of pleosporalin A, but not the 2 other final products. The pathway begins with the biosynthesis of the cyclized heptaketide 3-acetonyl-1,6,8-trihydroxy-2-naphthaldehyde by the NR-PKS pgmA. The C-6 hydroxyl group is further methylated by the O-methyltransferase pgmB to yield fusarubinaldehyde which is in turn oxidized by the cytochrome P450 monooxygenase pgmC at C-9. The C-1 hydroxyl group is then methylated spontaneously. Although pgmE, pgmD and pgmH are essential for the production of pleosporalin A, it is not the case for the 2 other final products and it remains difficult to assign a specific function to each enzyme. PgmF and pgmG seem not to be involved in pigment biosynthesis although they were regulated by the cluster-specific transcription factor pgmR. The protein is Short chain dehydrogenase pgmD of Aspergillus terreus.